The following is a 270-amino-acid chain: tRNA pseudouridine synthase A (270 aa).

Asp-60 functions as the Nucleophile in the catalytic mechanism. The RNA binding stretch occupies residues 107–111 (FHARF). Residue Tyr-118 participates in substrate binding. The segment at 168-172 (QCQSR) is interaction with tRNA.

The protein belongs to the tRNA pseudouridine synthase TruA family. As to quaternary structure, homodimer.

It carries out the reaction uridine(38/39/40) in tRNA = pseudouridine(38/39/40) in tRNA. In terms of biological role, formation of pseudouridine at positions 38, 39 and 40 in the anticodon stem and loop of transfer RNAs. This Escherichia coli O9:H4 (strain HS) protein is tRNA pseudouridine synthase A.